The sequence spans 508 residues: Photosystem II CP47 reaction center protein (508 aa).

Helical transmembrane passes span 21-36 (AVHI…WAGS), 101-115 (IVFS…IWHW), 140-156 (GIHL…FGAF), 203-218 (IAAG…FHLS), 237-252 (VLSS…AFVV), and 457-472 (SFAL…HGAR).

The protein belongs to the PsbB/PsbC family. PsbB subfamily. PSII is composed of 1 copy each of membrane proteins PsbA, PsbB, PsbC, PsbD, PsbE, PsbF, PsbH, PsbI, PsbJ, PsbK, PsbL, PsbM, PsbT, PsbX, PsbY, PsbZ, Psb30/Ycf12, at least 3 peripheral proteins of the oxygen-evolving complex and a large number of cofactors. It forms dimeric complexes. Interacts with PAM68. Interacts with HHL1. The cofactor is Binds multiple chlorophylls. PSII binds additional chlorophylls, carotenoids and specific lipids..

Its subcellular location is the plastid. It is found in the chloroplast thylakoid membrane. One of the components of the core complex of photosystem II (PSII). It binds chlorophyll and helps catalyze the primary light-induced photochemical processes of PSII. PSII is a light-driven water:plastoquinone oxidoreductase, using light energy to abstract electrons from H(2)O, generating O(2) and a proton gradient subsequently used for ATP formation. This Arabidopsis thaliana (Mouse-ear cress) protein is Photosystem II CP47 reaction center protein.